Here is a 208-residue protein sequence, read N- to C-terminus: Large ribosomal subunit protein uL4 (208 aa).

The interval 58-77 is disordered; it reads RGGGRKPWRQKGTGRARQGS. A compositionally biased stretch (basic residues) spans 60–71; it reads GGRKPWRQKGTG.

The protein belongs to the universal ribosomal protein uL4 family. As to quaternary structure, part of the 50S ribosomal subunit.

Its function is as follows. One of the primary rRNA binding proteins, this protein initially binds near the 5'-end of the 23S rRNA. It is important during the early stages of 50S assembly. It makes multiple contacts with different domains of the 23S rRNA in the assembled 50S subunit and ribosome. In terms of biological role, forms part of the polypeptide exit tunnel. The polypeptide is Large ribosomal subunit protein uL4 (Caldicellulosiruptor saccharolyticus (strain ATCC 43494 / DSM 8903 / Tp8T 6331)).